The following is a 501-amino-acid chain: Putative BTB/POZ domain-containing protein L107 (501 aa).

A BTB domain is found at Thr16–Gln87.

Belongs to the mimivirus BTB/WD family.

This is Putative BTB/POZ domain-containing protein L107 from Acanthamoeba polyphaga mimivirus (APMV).